A 397-amino-acid polypeptide reads, in one-letter code: Polygalacturonase (397 aa).

A signal peptide spans 1–22; the sequence is MGSYLGIYTILVLCLLGYSANA. PbH1 repeat units follow at residues 169-195, 196-217, 219-239, and 249-270; these read GKNM…HLGR, CEGV…SVGD, MKNL…SVGS, and VTDI…RIKT. Asparagine 171 is a glycosylation site (N-linked (GlcNAc...) asparagine). Aspartate 210 serves as the catalytic Proton donor. The cysteines at positions 212 and 229 are disulfide-linked. Residue histidine 233 is part of the active site. Asparagine 256 carries N-linked (GlcNAc...) asparagine glycosylation. Intrachain disulfides connect cysteine 341–cysteine 347 and cysteine 370–cysteine 386.

It belongs to the glycosyl hydrolase 28 family. As to expression, pollen.

It localises to the secreted. The protein resides in the cell wall. It carries out the reaction (1,4-alpha-D-galacturonosyl)n+m + H2O = (1,4-alpha-D-galacturonosyl)n + (1,4-alpha-D-galacturonosyl)m.. Its function is as follows. May function in depolymerizing pectin during pollen development, germination, and tube growth. The sequence is that of Polygalacturonase from Brassica napus (Rape).